We begin with the raw amino-acid sequence, 381 residues long: Succinyl-diaminopimelate desuccinylase (381 aa).

Residue histidine 76 coordinates Zn(2+). The active site involves aspartate 78. Aspartate 107 contacts Zn(2+). Glutamate 140 (proton acceptor) is an active-site residue. Residues glutamate 141, glutamate 169, and histidine 354 each coordinate Zn(2+).

The protein belongs to the peptidase M20A family. DapE subfamily. In terms of assembly, homodimer. Zn(2+) is required as a cofactor. Requires Co(2+) as cofactor.

The enzyme catalyses N-succinyl-(2S,6S)-2,6-diaminopimelate + H2O = (2S,6S)-2,6-diaminopimelate + succinate. Its pathway is amino-acid biosynthesis; L-lysine biosynthesis via DAP pathway; LL-2,6-diaminopimelate from (S)-tetrahydrodipicolinate (succinylase route): step 3/3. Catalyzes the hydrolysis of N-succinyl-L,L-diaminopimelic acid (SDAP), forming succinate and LL-2,6-diaminopimelate (DAP), an intermediate involved in the bacterial biosynthesis of lysine and meso-diaminopimelic acid, an essential component of bacterial cell walls. The chain is Succinyl-diaminopimelate desuccinylase from Gluconobacter oxydans (strain 621H) (Gluconobacter suboxydans).